Consider the following 169-residue polypeptide: Dihydrofolate reductase type 8 (169 aa).

The 167-residue stretch at 3–169 (ELHAILAATA…FTYRKKELTE (167 aa)) folds into the DHFR domain.

The protein belongs to the dihydrofolate reductase family. Homodimer.

The enzyme catalyses (6S)-5,6,7,8-tetrahydrofolate + NADP(+) = 7,8-dihydrofolate + NADPH + H(+). It participates in cofactor biosynthesis; tetrahydrofolate biosynthesis; 5,6,7,8-tetrahydrofolate from 7,8-dihydrofolate: step 1/1. In terms of biological role, key enzyme in folate metabolism. Catalyzes an essential reaction for de novo glycine and purine synthesis, and for DNA precursor synthesis. The sequence is that of Dihydrofolate reductase type 8 (dhfrVIII) from Escherichia coli.